Consider the following 289-residue polypeptide: MKKQPIVALESTVIAHGLPWPTNFETAVSMENKVKEKGAIPKTLGIINGEIKIGLTEKEIEHLAKAKNVMKIGTAEIAAAIALRRNAATTVSATMRLAKNAGIDVFATGGIGGVHRNVPWDVSQDIMELSKTRMIVVCAGFKSILDVERTIEFLETFQVTVVGYQTDYMPLFHTKESEYKVNIRADSPEEIVAIFNEKEKLGIEGAILVANPIPEQSEIPREELEEYIKKAVAQAKENGISGKSLTPFLLSRLTELSGGKTLTANIALLKNNASLAGEIAVALSRGGRD.

E10 functions as the Proton donor in the catalytic mechanism. Substrate contacts are provided by K71 and V91. D121 lines the Mn(2+) pocket. Residue 123 to 125 participates in substrate binding; it reads SQD. K142 acts as the Nucleophile in catalysis.

Belongs to the pseudouridine-5'-phosphate glycosidase family. In terms of assembly, homotrimer. Mn(2+) is required as a cofactor.

It carries out the reaction D-ribose 5-phosphate + uracil = psi-UMP + H2O. In terms of biological role, catalyzes the reversible cleavage of pseudouridine 5'-phosphate (PsiMP) to ribose 5-phosphate and uracil. Functions biologically in the cleavage direction, as part of a pseudouridine degradation pathway. This chain is Pseudouridine-5'-phosphate glycosidase, found in Kosmotoga olearia (strain ATCC BAA-1733 / DSM 21960 / TBF 19.5.1).